The primary structure comprises 598 residues: Nuclear receptor subfamily 4 group A member 2 (598 aa).

A disordered region spans residues 1–22 (MPCVQAQYGSSPQGASPASQGY). Positions 7–18 (QYGSSPQGASPA) are enriched in polar residues. Positions 260-335 (EGLCAVCGDN…VGMVKEVVRT (76 aa)) form a DNA-binding region, nuclear receptor. 2 consecutive NR C4-type zinc fingers follow at residues 263-283 (CAVCGDNAACQHYGVRTCEGC) and 299-318 (CLANKNCPVDKRRRNRCQYC). A Bipartite nuclear localization signal (NLS1) motif is present at residues 287–314 (FKRTVQKNAKYVCLANKNCPVDKRRRNR). The interval 337-361 (SLKGRRGRLPSKPKSPQEPSPPSPP) is disordered. The short motif at 338 to 350 (LKGRRGRLPSKPK) is the Nuclear localization signal (NLS1) element. Positions 352-361 (PQEPSPPSPP) are enriched in pro residues. Positions 360 to 595 (PPVSLISALV…AIIDKLFLDT (236 aa)) constitute an NR LBD domain. The short motif at 443-452 (FLELFVLRLA) is the nuclear export sequence (NES1) element. The short motif at 568 to 577 (QGLQRIFYLK) is the nuclear export sequence (NES2) element.

This sequence belongs to the nuclear hormone receptor family. Interacts with SFPQ, NCOR2, SIN3A and HADC1. The interaction with NCOR2 increases in the absence of PITX3. Interacts with PER2.

The protein resides in the cytoplasm. It localises to the nucleus. Functionally, transcriptional regulator which is important for the differentiation and maintenance of meso-diencephalic dopaminergic (mdDA) neurons during development. It is crucial for expression of a set of genes such as SLC6A3, SLC18A2, TH and DRD2 which are essential for development of mdDA neurons. This Pongo abelii (Sumatran orangutan) protein is Nuclear receptor subfamily 4 group A member 2 (NR4A2).